Consider the following 834-residue polypeptide: Leucine--tRNA ligase (834 aa).

A 'HIGH' region motif is present at residues 40-50 (PYPSGNIHMGH). The 'KMSKS' region signature appears at 586-590 (KMSKS). Lys589 contributes to the ATP binding site.

This sequence belongs to the class-I aminoacyl-tRNA synthetase family.

It localises to the cytoplasm. The catalysed reaction is tRNA(Leu) + L-leucine + ATP = L-leucyl-tRNA(Leu) + AMP + diphosphate. The sequence is that of Leucine--tRNA ligase from Nitratidesulfovibrio vulgaris (strain DSM 19637 / Miyazaki F) (Desulfovibrio vulgaris).